Consider the following 321-residue polypeptide: Ribosomal RNA small subunit methyltransferase H (321 aa).

S-adenosyl-L-methionine contacts are provided by residues 40–42 (GGH), Asp60, Phe84, Asp106, and Gln113.

The protein belongs to the methyltransferase superfamily. RsmH family.

The protein resides in the cytoplasm. The catalysed reaction is cytidine(1402) in 16S rRNA + S-adenosyl-L-methionine = N(4)-methylcytidine(1402) in 16S rRNA + S-adenosyl-L-homocysteine + H(+). Its function is as follows. Specifically methylates the N4 position of cytidine in position 1402 (C1402) of 16S rRNA. This Pasteurella multocida (strain Pm70) protein is Ribosomal RNA small subunit methyltransferase H.